A 624-amino-acid chain; its full sequence is Ceramide transfer protein (624 aa).

The span at 1–11 (MSDNQSWNSSG) shows a compositional bias: polar residues. The segment at 1 to 24 (MSDNQSWNSSGSEEDPETESGPPV) is disordered. One can recognise a PH domain in the interval 23–117 (PVERCGVLSK…WIDAIEQHKT (95 aa)). S126 carries the post-translational modification Phosphoserine. Position 132 is a phosphoserine; by PKD (S132). A Phosphoserine modification is found at S135. A coiled-coil region spans residues 263–303 (IELMVKREDSWQKRLDKETEKKRRTEEAYKNAMTELKKKSH). Position 315 is a phosphoserine (S315). Residues 321 to 327 (EFFDAVE) carry the FFAT motif. Phosphotyrosine is present on Y372. S373, S377, and S380 each carry phosphoserine. In terms of domain architecture, START spans 389 to 618 (DVHRFSSQVE…FTSYVQEKTA (230 aa)). Residues E472, Q493, N530, and Y579 each coordinate an N-acylsphing-4-enine.

Interacts with VAPA and VAPB. Interaction with VAPB is less efficient than with VAPA. Interacts (via FFAT motif) with MOSPD2 (via MSP domain). Phosphorylation on Ser-132 decreases the affinity toward phosphatidylinositol 4-phosphate at Golgi membranes and reduces ceramide transfer activity. Inactivated by hyperphosphorylation of serine residues by CSNK1G2/CK1 that triggers dissociation from the Golgi complex, thus down-regulating ER-to-Golgi transport of ceramide and sphingomyelin synthesis. As to expression, widely expressed.

Its subcellular location is the cytoplasm. The protein localises to the golgi apparatus. It localises to the endoplasmic reticulum. The enzyme catalyses N-hexadecanoylsphing-4-enine(in) = N-hexadecanoylsphing-4-enine(out). In terms of biological role, shelters ceramides and diacylglycerol lipids inside its START domain and mediates the intracellular trafficking of ceramides and diacylglycerol lipids in a non-vesicular manner. The polypeptide is Ceramide transfer protein (Homo sapiens (Human)).